The chain runs to 58 residues: UPF0339 protein MA_3316 (58 aa).

This sequence belongs to the UPF0339 family.

This is UPF0339 protein MA_3316 from Methanosarcina acetivorans (strain ATCC 35395 / DSM 2834 / JCM 12185 / C2A).